Reading from the N-terminus, the 155-residue chain is Protein-export protein SecB (155 aa).

The protein belongs to the SecB family. In terms of assembly, homotetramer, a dimer of dimers. One homotetramer interacts with 1 SecA dimer.

The protein localises to the cytoplasm. Functionally, one of the proteins required for the normal export of preproteins out of the cell cytoplasm. It is a molecular chaperone that binds to a subset of precursor proteins, maintaining them in a translocation-competent state. It also specifically binds to its receptor SecA. This is Protein-export protein SecB from Salmonella heidelberg (strain SL476).